Reading from the N-terminus, the 272-residue chain is Putative pyruvate, phosphate dikinase regulatory protein (272 aa).

ADP is bound at residue glycine 147–threonine 154.

This sequence belongs to the pyruvate, phosphate/water dikinase regulatory protein family. PDRP subfamily.

It catalyses the reaction N(tele)-phospho-L-histidyl/L-threonyl-[pyruvate, phosphate dikinase] + ADP = N(tele)-phospho-L-histidyl/O-phospho-L-threonyl-[pyruvate, phosphate dikinase] + AMP + H(+). The catalysed reaction is N(tele)-phospho-L-histidyl/O-phospho-L-threonyl-[pyruvate, phosphate dikinase] + phosphate + H(+) = N(tele)-phospho-L-histidyl/L-threonyl-[pyruvate, phosphate dikinase] + diphosphate. Functionally, bifunctional serine/threonine kinase and phosphorylase involved in the regulation of the pyruvate, phosphate dikinase (PPDK) by catalyzing its phosphorylation/dephosphorylation. This chain is Putative pyruvate, phosphate dikinase regulatory protein, found in Clostridium botulinum (strain Alaska E43 / Type E3).